A 226-amino-acid chain; its full sequence is Ribose-5-phosphate isomerase A (226 aa).

Substrate-binding positions include threonine 28–threonine 31, aspartate 80–aspartate 83, and lysine 93–glycine 96. Glutamate 102 (proton acceptor) is an active-site residue. Lysine 120 is a substrate binding site.

The protein belongs to the ribose 5-phosphate isomerase family. As to quaternary structure, homodimer.

The catalysed reaction is aldehydo-D-ribose 5-phosphate = D-ribulose 5-phosphate. Its pathway is carbohydrate degradation; pentose phosphate pathway; D-ribose 5-phosphate from D-ribulose 5-phosphate (non-oxidative stage): step 1/1. In terms of biological role, catalyzes the reversible conversion of ribose-5-phosphate to ribulose 5-phosphate. This is Ribose-5-phosphate isomerase A from Caulobacter sp. (strain K31).